A 331-amino-acid chain; its full sequence is L-lactate dehydrogenase A chain (331 aa).

NAD(+)-binding positions include 29–57 (GMVGMASAVSILLKDLCDELAMVDVMEDK) and Arg98. Arg105, Asn137, and Arg168 together coordinate substrate. Asn137 contributes to the NAD(+) binding site. The Proton acceptor role is filled by His192. Thr247 contributes to the substrate binding site.

The protein belongs to the LDH/MDH superfamily. LDH family. In terms of assembly, homotetramer.

It is found in the cytoplasm. The catalysed reaction is (S)-lactate + NAD(+) = pyruvate + NADH + H(+). It functions in the pathway fermentation; pyruvate fermentation to lactate; (S)-lactate from pyruvate: step 1/1. In terms of biological role, interconverts simultaneously and stereospecifically pyruvate and lactate with concomitant interconversion of NADH and NAD(+). This chain is L-lactate dehydrogenase A chain (ldha), found in Notothenia neglecta (Yellowbelly rockcod).